The sequence spans 609 residues: UvrABC system protein C (609 aa).

Residues 16–94 form the GIY-YIG domain; the sequence is SSAGVYRMYD…IKQYMPKYNV (79 aa). Residues 203–238 form the UVR domain; sequence QQVISTLVAKMEQAAQQQEYEQAARFRDQIMALRKV.

The protein belongs to the UvrC family. In terms of assembly, interacts with UvrB in an incision complex.

The protein resides in the cytoplasm. The UvrABC repair system catalyzes the recognition and processing of DNA lesions. UvrC both incises the 5' and 3' sides of the lesion. The N-terminal half is responsible for the 3' incision and the C-terminal half is responsible for the 5' incision. The sequence is that of UvrABC system protein C from Shewanella putrefaciens (strain CN-32 / ATCC BAA-453).